A 713-amino-acid polypeptide reads, in one-letter code: Probable 1-deoxy-D-xylulose-5-phosphate synthase 2, chloroplastic (713 aa).

A chloroplast-targeting transit peptide spans 1-30 (MALQASSSPSMFRAIPTNTNASCRRKLQVR). Thiamine diphosphate contacts are provided by residues H140 and 181-183 (GHS). D212 lines the Mg(2+) pocket. Thiamine diphosphate contacts are provided by residues 213 to 214 (GA), N241, Y362, and E444. Mg(2+) is bound at residue N241.

The protein belongs to the transketolase family. DXPS subfamily. In terms of assembly, homodimer. It depends on Mg(2+) as a cofactor. The cofactor is thiamine diphosphate.

The protein localises to the plastid. It is found in the chloroplast. The enzyme catalyses D-glyceraldehyde 3-phosphate + pyruvate + H(+) = 1-deoxy-D-xylulose 5-phosphate + CO2. The protein operates within metabolic intermediate biosynthesis; 1-deoxy-D-xylulose 5-phosphate biosynthesis; 1-deoxy-D-xylulose 5-phosphate from D-glyceraldehyde 3-phosphate and pyruvate: step 1/1. Its function is as follows. Catalyzes the acyloin condensation reaction between C atoms 2 and 3 of pyruvate and glyceraldehyde 3-phosphate to yield 1-deoxy-D-xylulose-5-phosphate (DXP). Is a limiting enzyme for plastidic isoprenoid biosynthesis and essential for chloroplast development. This chain is Probable 1-deoxy-D-xylulose-5-phosphate synthase 2, chloroplastic, found in Oryza sativa subsp. japonica (Rice).